A 103-amino-acid polypeptide reads, in one-letter code: Small ribosomal subunit protein uS10 (103 aa).

This sequence belongs to the universal ribosomal protein uS10 family. Part of the 30S ribosomal subunit.

In terms of biological role, involved in the binding of tRNA to the ribosomes. This chain is Small ribosomal subunit protein uS10, found in Acinetobacter baylyi (strain ATCC 33305 / BD413 / ADP1).